The sequence spans 965 residues: Iron-responsive element-binding protein 2 (965 aa).

Residues 142 to 170 are disordered; the sequence is NAPNPGGGEAQKPTAKLSPLKGQPRKLPC. [4Fe-4S] cluster is bound by residues Cys-514, Cys-580, and Cys-583.

It belongs to the aconitase/IPM isomerase family. [4Fe-4S] cluster is required as a cofactor. In terms of processing, ubiquitinated and degraded by the proteasome in presence of high level of iron and oxygen.

The protein localises to the cytoplasm. Functionally, RNA-binding protein that binds to iron-responsive elements (IRES), which are stem-loop structures found in the 5'-UTR of ferritin, and delta aminolevulinic acid synthase mRNAs, and in the 3'-UTR of transferrin receptor mRNA. Binding to the IRE element in ferritin results in the repression of its mRNA translation. Binding of the protein to the transferrin receptor mRNA inhibits the degradation of this otherwise rapidly degraded mRNA. This chain is Iron-responsive element-binding protein 2 (IREB2), found in Gallus gallus (Chicken).